A 507-amino-acid chain; its full sequence is Extracellular elastase (507 aa).

The N-terminal stretch at 1–28 is a signal peptide; that stretch reads MKNFSKFALTSIAALTVASPLVNTEVDA. Residues 29-207 constitute a propeptide that is removed on maturation; that stretch reads KDKVSATQNI…VVDKLNMIKE (179 aa). Aspartate 347 is a Ca(2+) binding site. Histidine 351 lines the Zn(2+) pocket. Glutamate 352 is a catalytic residue. Zn(2+)-binding residues include histidine 355 and glutamate 375. Aspartate 386, glutamate 388, aspartate 389, leucine 391, glutamate 394, tyrosine 397, threonine 398, valine 401, and aspartate 404 together coordinate Ca(2+). Catalysis depends on histidine 435, which acts as the Proton donor.

Belongs to the peptidase M4 family. Ca(2+) is required as a cofactor. It depends on Zn(2+) as a cofactor.

Its subcellular location is the secreted. Its function is as follows. Protease that has a low substrate specificity. Glucagon is preferentially cleaved between aromatic (Phe) and hydrophobic (Val) amino acids. Hydrolyzes casein and elastin. The protein is Extracellular elastase (sepA) of Staphylococcus epidermidis.